A 250-amino-acid chain; its full sequence is 5'-nucleotidase SurE (250 aa).

A divalent metal cation contacts are provided by Asp8, Asp9, Ser40, and Asn94.

The protein belongs to the SurE nucleotidase family. Requires a divalent metal cation as cofactor.

It is found in the cytoplasm. The enzyme catalyses a ribonucleoside 5'-phosphate + H2O = a ribonucleoside + phosphate. Nucleotidase that shows phosphatase activity on nucleoside 5'-monophosphates. This chain is 5'-nucleotidase SurE, found in Wolbachia pipientis wMel.